A 288-amino-acid chain; its full sequence is Sulfur carrier protein FdhD (288 aa).

C122 acts as the Cysteine persulfide intermediate in catalysis. Residue F268–R273 participates in Mo-bis(molybdopterin guanine dinucleotide) binding.

This sequence belongs to the FdhD family.

It is found in the cytoplasm. Functionally, required for formate dehydrogenase (FDH) activity. Acts as a sulfur carrier protein that transfers sulfur from IscS to the molybdenum cofactor prior to its insertion into FDH. The polypeptide is Sulfur carrier protein FdhD (Anaeromyxobacter dehalogenans (strain 2CP-1 / ATCC BAA-258)).